The sequence spans 342 residues: Dihydroorotase (342 aa).

Residues H13 and H15 each coordinate Zn(2+). Substrate-binding positions include 15–17 (HLR) and N41. Zn(2+) is bound by residues K99, H136, and H174. K99 carries the post-translational modification N6-carboxylysine. H136 provides a ligand contact to substrate. L218 is a substrate binding site. D246 is a binding site for Zn(2+). The active site involves D246. H250 and A262 together coordinate substrate.

Belongs to the metallo-dependent hydrolases superfamily. DHOase family. Class II DHOase subfamily. Homodimer. The cofactor is Zn(2+).

The catalysed reaction is (S)-dihydroorotate + H2O = N-carbamoyl-L-aspartate + H(+). It participates in pyrimidine metabolism; UMP biosynthesis via de novo pathway; (S)-dihydroorotate from bicarbonate: step 3/3. In terms of biological role, catalyzes the reversible cyclization of carbamoyl aspartate to dihydroorotate. This is Dihydroorotase from Synechocystis sp. (strain ATCC 27184 / PCC 6803 / Kazusa).